We begin with the raw amino-acid sequence, 947 residues long: Netrin receptor unc-5 (947 aa).

One can recognise an Ig-like domain in the interval 43-141; the sequence is VIRNKPLRLQ…VHLAYMRKHF (99 aa). 5 disulfides stabilise this stretch: Cys53–Cys112, Cys160–Cys209, Cys243–Cys295, Cys247–Cys299, and Cys273–Cys285. The Ig-like C2-type domain maps to 139–226; that stretch reads KHFLKSPVAQ…SRKTDPVEVQ (88 aa). A glycan (N-linked (GlcNAc...) asparagine) is linked at Asn206. TSP type-1 domains follow at residues 230–300 and 302–354; these read DGGW…VPCK and DGGW…QLCT. Residues Trp305 and Trp308 are each glycosylated (C-linked (Man) tryptophan). A helical membrane pass occupies residues 369-389; sequence GSVASIFIVASFILAILAMFC. Over 390–947 the chain is Cytoplasmic; the sequence is CKRGNSKKSK…LSAFPQIVSP (558 aa). A Phosphotyrosine modification is found at Tyr510. Residues 530–658 form the ZU5 domain; that stretch reads NIVAAQIDSN…LNTNMFVQFE (129 aa). Residues 857 to 938 enclose the Death domain; the sequence is ELARLLDMPN…DAVMVLERFL (82 aa).

The protein belongs to the unc-5 family. As to quaternary structure, interacts (via cytoplasmic domain) with src-1 (via SH2 domain and SH3 domain). Interacts with madd-4. Interacts with unc-129; the interaction is direct. Post-translationally, phosphorylated on different cytoplasmic tyrosine residues. May be phosphorylated on tyrosine residues by src-1. Tyrosine phosphorylation is unc-6-dependent. In terms of processing, glycosylated via C-mannosylation by dpy-19 at Trp-305 and Trp-308. In terms of tissue distribution, expressed in cell bodies and axons of the VNC motor neurons that extend axons to the dorsal midline and within the ventral nerve cord. Expressed in gonadal distal tip cells (DTC).

The protein resides in the cell membrane. Its subcellular location is the membrane raft. The protein localises to the cell projection. It localises to the neuron projection. Functionally, receptor for netrin (unc-6) required for axon guidance. Mediates axon repulsion of neuronal growth cones in the developing nervous system upon ligand binding. Axon migration is mediated by the secreted unc-6, which promotes attraction of neurons and axons through binding to the unc-40 receptor, while repulsion requires both unc-5 and unc-40 receptors. Involved in the ventral-dorsal and anterior-posterior migration of distal tip cells along the body, which may be mediated by Wnt receptor mom-5, ced-10/Rac, ced-12/ELMO and mig-2/RhoG. The polypeptide is Netrin receptor unc-5 (Caenorhabditis elegans).